We begin with the raw amino-acid sequence, 504 residues long: Diacylglycerol O-acyltransferase 1B (504 aa).

The tract at residues 1–72 is disordered; the sequence is MAISDEPESV…VNSQQQNEKQ (72 aa). The segment covering 24–41 has biased composition (polar residues); the sequence is SATSTAGLFNSPETTTDS. The segment covering 53–65 has biased composition (low complexity); it reads DDSINSDDAAVNS. 7 helical membrane-spanning segments follow: residues 108–128, 152–172, 184–204, 209–229, 259–279, 301–321, and 348–368; these read HAGL…RLII, WPLF…FIVE, VVVV…VLVI, SAFV…LKLV, YPYN…TLCY, LIIF…PIVQ, and VWLC…AELL. The FYXDWWN motif signature appears at 375 to 381; the sequence is FYKDWWN. The next 3 membrane-spanning stretches (helical) occupy residues 416–436, 438–458, and 471–491; these read AAAL…CIAV, CHIF…LVLI, and VGNM…CVLL. Histidine 430 is an active-site residue.

Belongs to the membrane-bound acyltransferase family. Sterol o-acyltransferase subfamily. In terms of tissue distribution, highly expressed in flowers and pods. Expressed at low levels in roots, stems and leaves.

It localises to the endoplasmic reticulum membrane. The catalysed reaction is an acyl-CoA + a 1,2-diacyl-sn-glycerol = a triacyl-sn-glycerol + CoA. It functions in the pathway glycerolipid metabolism; triacylglycerol biosynthesis. Functionally, major contributors to triacylglycerol (TAG) synthesis and oil accumulation in developing seeds. Catalyzes the acylation of the sn-3 hydroxy group of sn-1,2-diacylglycerol using acyl-CoA. Has a marked preference for oleoyl-CoA and sn-1,2-dioleoylglycerol over vernoloyl-CoA and sn-1,2-divernoloylglycerol. This is Diacylglycerol O-acyltransferase 1B from Glycine max (Soybean).